We begin with the raw amino-acid sequence, 492 residues long: Glutamyl-tRNA(Gln) amidotransferase subunit A (492 aa).

Catalysis depends on charge relay system residues Lys-77 and Ser-152. The active-site Acyl-ester intermediate is Ser-176.

Belongs to the amidase family. GatA subfamily. Heterotrimer of A, B and C subunits.

It catalyses the reaction L-glutamyl-tRNA(Gln) + L-glutamine + ATP + H2O = L-glutaminyl-tRNA(Gln) + L-glutamate + ADP + phosphate + H(+). In terms of biological role, allows the formation of correctly charged Gln-tRNA(Gln) through the transamidation of misacylated Glu-tRNA(Gln) in organisms which lack glutaminyl-tRNA synthetase. The reaction takes place in the presence of glutamine and ATP through an activated gamma-phospho-Glu-tRNA(Gln). This Chlamydia pneumoniae (Chlamydophila pneumoniae) protein is Glutamyl-tRNA(Gln) amidotransferase subunit A (gatA).